Reading from the N-terminus, the 139-residue chain is ATP synthase epsilon chain (139 aa).

This sequence belongs to the ATPase epsilon chain family. In terms of assembly, F-type ATPases have 2 components, CF(1) - the catalytic core - and CF(0) - the membrane proton channel. CF(1) has five subunits: alpha(3), beta(3), gamma(1), delta(1), epsilon(1). CF(0) has three main subunits: a, b and c.

The protein resides in the cell inner membrane. Produces ATP from ADP in the presence of a proton gradient across the membrane. This chain is ATP synthase epsilon chain, found in Pseudomonas putida (strain W619).